Here is a 229-residue protein sequence, read N- to C-terminus: DNA repair protein RecO (229 aa).

The protein belongs to the RecO family.

Involved in DNA repair and RecF pathway recombination. In Legionella pneumophila (strain Paris), this protein is DNA repair protein RecO.